The chain runs to 256 residues: MISAQNLVYSLQGRRLTDNVSLTFPGGEIVAILGPNGAGKSTLLRQLTGYLQPDSGECRLFNKPLNEWSITELAKHRAVMRQNSHMAFPFSVQEVIQMGRHPHRTGNQDNETAQIMALCDCQALANRDYRQLSGGEQQRVQLARLLVQLWEPTPSPKWLFLDEPTSALDIHHQQHLFRLLRQLVHERQFNVCCVLHDLNLAARYADRIVLMQKGKVIANGKPQDVLTQQALTMLYGADITVLEDPANHSPLIVLDH.

One can recognise an ABC transporter domain in the interval 2-238 (ISAQNLVYSL…QALTMLYGAD (237 aa)). An ATP-binding site is contributed by 34–41 (GPNGAGKS).

This sequence belongs to the ABC transporter superfamily. Heme (hemin) importer (TC 3.A.1.14.5) family. The complex is composed of two ATP-binding proteins (HmuV), two transmembrane proteins (HmuU) and a solute-binding protein (HmuT).

It localises to the cell inner membrane. Part of the ABC transporter complex HmuTUV involved in hemin import. Responsible for energy coupling to the transport system. This Shigella dysenteriae serotype 1 (strain Sd197) protein is Hemin import ATP-binding protein HmuV.